A 411-amino-acid chain; its full sequence is Probable indole-3-pyruvate monooxygenase YUCCA4 (411 aa).

Residue 21–26 (GAGPSG) coordinates FAD. 183-188 (GCGNSG) lines the NADP(+) pocket.

Belongs to the FMO family. FAD serves as cofactor. Expressed in leaves, stems, flowers, buds and siliques. Detected in the apical gynoecium and in the developing ovules.

The protein localises to the cytoplasm. It localises to the endoplasmic reticulum membrane. It catalyses the reaction indole-3-pyruvate + NADPH + O2 + H(+) = (indol-3-yl)acetate + CO2 + NADP(+) + H2O. It participates in plant hormone metabolism; auxin biosynthesis. Its function is as follows. Involved in auxin biosynthesis. Both isoforms are catalitically active. Involved during embryogenesis and seedling development. Required for the formation of floral organs and vascular tissues. Belongs to the set of redundant YUCCA genes probably responsible for auxin biosynthesis in shoots. The sequence is that of Probable indole-3-pyruvate monooxygenase YUCCA4 (YUC4) from Arabidopsis thaliana (Mouse-ear cress).